A 964-amino-acid chain; its full sequence is Protein HIRA (964 aa).

WD repeat units lie at residues 10 to 50 (RHEG…KDNT), 64 to 103 (DHFG…GTSE), 123 to 162 (GHTA…CTAV), 165 to 204 (GHTS…LAHK), 259 to 331 (GHNA…PLFV), and 335 to 376 (FFSQ…HRLS). Residues 453–490 (SHEDSKKTAGPTADDVKKGNQLSSPVKQREYRRPDGRK) are disordered. A compositionally biased stretch (basic and acidic residues) spans 479-490 (KQREYRRPDGRK). One copy of the WD 7 repeat lies at 644-685 (LWSDRISGKVTVLAGNANFWAVGCEDGFLQVYTRCGVRAMPA). Residues 920–940 (ASNRKVQRLLNEFMDLLLEYE) adopt a coiled-coil conformation.

This sequence belongs to the WD repeat HIR1 family. As to quaternary structure, interacts with RS2. More abundant in apices and young leaf primordia than in fully expanded leaf tissues.

It is found in the nucleus. Histone chaperone involved in maintining knox genes silencing throughout leaf development. This is Protein HIRA from Zea mays (Maize).